The primary structure comprises 47 residues: Defensin Tk-AMP-D1.1 (47 aa).

Cystine bridges form between Cys-3–Cys-47, Cys-14–Cys-34, Cys-20–Cys-41, and Cys-24–Cys-43.

In terms of biological role, plant defense peptide. The protein is Defensin Tk-AMP-D1.1 of Triticum kiharae (Wheat).